We begin with the raw amino-acid sequence, 1352 residues long: Spike glycoprotein (1352 aa).

An N-terminal signal peptide occupies residues 1–12; the sequence is MIRSVLVLMCSL. At 13-1297 the chain is on the extracellular side; that stretch reads TFIGNLTRGQ…GNYTFYQKWP (1285 aa). In terms of domain architecture, BetaCoV S1-NTD spans 22-359; sequence QSVDMGHNGT…DDLAQLQCSY (338 aa). N-linked (GlcNAc...) asparagine; by host glycosylation is found at Asn29, Asn73, Asn111, Asn132, Asn167, Asn174, Asn244, and Asn250. Cys193 and Cys245 are oxidised to a cystine. Disulfide bonds link Cys347/Cys357 and Cys391/Cys415. One can recognise a BetaCoV S1-CTD domain in the interval 389-585; that stretch reads QECDFTPMLT…GTDTNSVCPM (197 aa). Residue Asn418 is glycosylated (N-linked (GlcNAc...) asparagine; by host). 2 cysteine pairs are disulfide-bonded: Cys433–Cys486 and Cys445–Cys583. Residues Asn495, Asn590, Asn617, Asn716, Asn760, Asn771, Asn782, and Asn867 are each glycosylated (N-linked (GlcNAc...) asparagine; by host). Fusion peptide stretches follow at residues 885–906 and 904–926; these read STIE…MQGY and QGYD…AQYV. A disulfide bridge links Cys909 with Cys922. Residues 991-1041 are heptad repeat 1; sequence QKIIANKFNQALGAMQTGFTTTNLAFNKVQDAVNANAMALSKLAAELSNTF. Residues 1020 to 1064 adopt a coiled-coil conformation; it reads QDAVNANAMALSKLAAELSNTFGAISSSISDILARLDTVEQEAQI. N-linked (GlcNAc...) asparagine; by host glycosylation is found at Asn1145, Asn1172, Asn1214, Asn1226, Asn1242, Asn1257, Asn1278, and Asn1289. Positions 1247 to 1286 are heptad repeat 2; that stretch reads GPNFQEISKINTTLLNLNTELMVLSEVVKQLNESYIDLKE. A coiled-coil region spans residues 1259–1287; that stretch reads TLLNLNTELMVLSEVVKQLNESYIDLKEL. The chain crosses the membrane as a helical span at residues 1298-1318; sequence WYIWLGFIAGLVALALCVFFI. The Cytoplasmic segment spans residues 1319–1352; the sequence is LCCTGCGTSCLGKLKCNRCCDSYDEYEVEKIHVH. Positions 1350–1352 match the KxHxx motif; sequence HVH.

The protein belongs to the betacoronaviruses spike protein family. Homotrimer; each monomer consists of a S1 and a S2 subunit. The resulting peplomers protrude from the virus surface as spikes. Post-translationally, specific enzymatic cleavages in vivo yield mature proteins. The precursor is processed into S1 and S2 by host cell furin or another cellular protease to yield the mature S1 and S2 proteins. Additionally, a second cleavage leads to the release of a fusion peptide after viral attachment to host cell receptor. The cytoplasmic Cys-rich domain is palmitoylated. Spike glycoprotein is digested within host endosomes.

The protein localises to the virion membrane. It localises to the host endoplasmic reticulum-Golgi intermediate compartment membrane. The protein resides in the host cell membrane. In terms of biological role, attaches the virion to the cell membrane by interacting with host receptor, initiating the infection. Functionally, mediates fusion of the virion and cellular membranes by acting as a class I viral fusion protein. Under the current model, the protein has at least three conformational states: pre-fusion native state, pre-hairpin intermediate state, and post-fusion hairpin state. During viral and target cell membrane fusion, the coiled coil regions (heptad repeats) assume a trimer-of-hairpins structure, positioning the fusion peptide in close proximity to the C-terminal region of the ectodomain. The formation of this structure appears to drive apposition and subsequent fusion of viral and target cell membranes. Acts as a viral fusion peptide which is unmasked following S2 cleavage occurring upon virus endocytosis. This chain is Spike glycoprotein, found in Bat coronavirus HKU5 (BtCoV).